A 276-amino-acid chain; its full sequence is Undecaprenyl-diphosphatase 1 (276 aa).

7 helical membrane-spanning segments follow: residues I4–V24, T46–Y63, F83–K103, V108–W128, V187–E207, V217–C237, and V252–W272.

The protein belongs to the UppP family.

It localises to the cell inner membrane. The catalysed reaction is di-trans,octa-cis-undecaprenyl diphosphate + H2O = di-trans,octa-cis-undecaprenyl phosphate + phosphate + H(+). Its function is as follows. Catalyzes the dephosphorylation of undecaprenyl diphosphate (UPP). Confers resistance to bacitracin. This chain is Undecaprenyl-diphosphatase 1, found in Burkholderia lata (strain ATCC 17760 / DSM 23089 / LMG 22485 / NCIMB 9086 / R18194 / 383).